The primary structure comprises 81 residues: Metallocarboxypeptidase inhibitor (81 aa).

The N-terminal stretch at 1–15 (MFLLVFLCCLHLVIS) is a signal peptide. Disulfide bonds link Cys25–Cys48, Cys32–Cys76, Cys33–Cys57, and Cys36–Cys72.

Its function is as follows. Tightly binding, competitive inhibitor of different types of pancreatic-like carboxypeptidases. Inhibits human CPA4. This is Metallocarboxypeptidase inhibitor from Hirudo medicinalis (Medicinal leech).